The sequence spans 235 residues: Protein MAINTENANCE OF PSII UNDER HIGH LIGHT 1 (235 aa).

Residues threonine 127–leucine 147 traverse the membrane as a helical segment. The disordered stretch occupies residues glutamine 181–serine 235. Polar residues-rich tracts occupy residues leucine 200–proline 214 and glutamate 224–serine 235.

Interacts with psbA, psbB, psbC and psbD.

It is found in the plastid. Its subcellular location is the chloroplast thylakoid membrane. Its function is as follows. Interacts with photosystem II (PSII) core complexes and participates in the maintenance of normal PSII activity under photoinhibitory stress. May protect against photodamage or stabilize PSII under high-light stress. Participates in the maintainance of proper PSII function under high-light stress by protecting PSII from photooxidative damage. The sequence is that of Protein MAINTENANCE OF PSII UNDER HIGH LIGHT 1 from Arabidopsis thaliana (Mouse-ear cress).